A 473-amino-acid polypeptide reads, in one-letter code: C3a anaphylatoxin chemotactic receptor (473 aa).

The Extracellular segment spans residues Met-1–Asp-23. N-linked (GlcNAc...) asparagine glycosylation occurs at Asn-9. A helical membrane pass occupies residues Ile-24–Trp-46. Over Val-47 to Asn-57 the chain is Cytoplasmic. The chain crosses the membrane as a helical span at residues Thr-58 to Ala-80. The Extracellular segment spans residues His-81–Lys-96. Residues Cys-95 and Cys-172 are joined by a disulfide bond. Residues Leu-97–Leu-118 traverse the membrane as a helical segment. The Cytoplasmic portion of the chain corresponds to Asp-119–Ala-139. A helical transmembrane segment spans residues Phe-140–Tyr-160. Residues Arg-161–Arg-329 are Extracellular-facing. Residues Tyr-174 and Tyr-184 each carry the sulfotyrosine modification. A glycan (N-linked (GlcNAc...) asparagine) is linked at Asn-201. Positions Phe-233–Tyr-252 are disordered. Tyr-308 carries the post-translational modification Sulfotyrosine. The chain crosses the membrane as a helical span at residues Leu-330–Val-349. The Cytoplasmic portion of the chain corresponds to Phe-350–Arg-366. Residues Val-367 to Leu-389 traverse the membrane as a helical segment. Topologically, residues Val-390–Asp-406 are extracellular. The helical transmembrane segment at His-407 to Leu-427 threads the bilayer. The Cytoplasmic portion of the chain corresponds to Gly-428–Val-473. A Phosphoserine modification is found at Ser-448. Position 452 is a phosphothreonine (Thr-452).

The protein belongs to the G-protein coupled receptor 1 family. Interacts with VGF-derived peptide TLQP-21.

The protein resides in the cell membrane. Receptor for the chemotactic and inflammatory peptide anaphylatoxin C3a. This receptor stimulates chemotaxis, granule enzyme release and superoxide anion production. This chain is C3a anaphylatoxin chemotactic receptor (C3ar1), found in Rattus norvegicus (Rat).